The primary structure comprises 247 residues: Dihydroorotate dehydrogenase B (NAD(+)), electron transfer subunit (247 aa).

The region spanning 2-96 (RWKMKARVLS…TGPHGNGFEI (95 aa)) is the FAD-binding FR-type domain. FAD-binding positions include 49–52 (RPFS), 64–66 (LYQ), and 71–72 (GT). Residues C210, C215, C218, and C234 each coordinate [2Fe-2S] cluster.

This sequence belongs to the PyrK family. In terms of assembly, heterotetramer of 2 PyrK and 2 PyrD type B subunits. The cofactor is [2Fe-2S] cluster. It depends on FAD as a cofactor.

It functions in the pathway pyrimidine metabolism; UMP biosynthesis via de novo pathway; orotate from (S)-dihydroorotate (NAD(+) route): step 1/1. Responsible for channeling the electrons from the oxidation of dihydroorotate from the FMN redox center in the PyrD type B subunit to the ultimate electron acceptor NAD(+). This Caldanaerobacter subterraneus subsp. tengcongensis (strain DSM 15242 / JCM 11007 / NBRC 100824 / MB4) (Thermoanaerobacter tengcongensis) protein is Dihydroorotate dehydrogenase B (NAD(+)), electron transfer subunit.